A 381-amino-acid chain; its full sequence is Dual-specificity RNA methyltransferase RlmN (381 aa).

Residue Glu-95 is the Proton acceptor of the active site. Residues 101 to 339 form the Radical SAM core domain; the sequence is DGRRGTLCVS…MTTVRTTRGD (239 aa). A disulfide bond links Cys-108 and Cys-345. [4Fe-4S] cluster contacts are provided by Cys-115, Cys-119, and Cys-122. S-adenosyl-L-methionine-binding positions include 169–170, Ser-201, 223–225, and Asn-302; these read GE and SLH. Cys-345 (S-methylcysteine intermediate) is an active-site residue.

It belongs to the radical SAM superfamily. RlmN family. The cofactor is [4Fe-4S] cluster.

It localises to the cytoplasm. The catalysed reaction is adenosine(2503) in 23S rRNA + 2 reduced [2Fe-2S]-[ferredoxin] + 2 S-adenosyl-L-methionine = 2-methyladenosine(2503) in 23S rRNA + 5'-deoxyadenosine + L-methionine + 2 oxidized [2Fe-2S]-[ferredoxin] + S-adenosyl-L-homocysteine. It catalyses the reaction adenosine(37) in tRNA + 2 reduced [2Fe-2S]-[ferredoxin] + 2 S-adenosyl-L-methionine = 2-methyladenosine(37) in tRNA + 5'-deoxyadenosine + L-methionine + 2 oxidized [2Fe-2S]-[ferredoxin] + S-adenosyl-L-homocysteine. In terms of biological role, specifically methylates position 2 of adenine 2503 in 23S rRNA and position 2 of adenine 37 in tRNAs. m2A2503 modification seems to play a crucial role in the proofreading step occurring at the peptidyl transferase center and thus would serve to optimize ribosomal fidelity. In Alcanivorax borkumensis (strain ATCC 700651 / DSM 11573 / NCIMB 13689 / SK2), this protein is Dual-specificity RNA methyltransferase RlmN.